A 435-amino-acid polypeptide reads, in one-letter code: Citrate synthase (435 aa).

Catalysis depends on residues histidine 311 and aspartate 370.

It belongs to the citrate synthase family. As to quaternary structure, homohexamer.

It catalyses the reaction oxaloacetate + acetyl-CoA + H2O = citrate + CoA + H(+). It functions in the pathway carbohydrate metabolism; tricarboxylic acid cycle; isocitrate from oxaloacetate: step 1/2. This is Citrate synthase (gltA) from Rickettsia africae (strain ESF-5).